We begin with the raw amino-acid sequence, 148 residues long: UPF0756 membrane protein YeaL (148 aa).

4 consecutive transmembrane segments (helical) span residues 14-34, 51-71, 86-106, and 121-141; these read ALGFISHNTTVAVSILVLIIV, LSIGIIILTIGVMAPIASGTL, LVAIAVGVIVSWLGGRGVTLM, and VLGVALFRGVPVGPLIAAGLV.

It belongs to the UPF0756 family.

It localises to the cell membrane. The sequence is that of UPF0756 membrane protein YeaL from Shigella boydii serotype 18 (strain CDC 3083-94 / BS512).